Consider the following 630-residue polypeptide: Glutamyl-tRNA(Gln) amidotransferase subunit E (630 aa).

This sequence belongs to the GatB/GatE family. GatE subfamily. In terms of assembly, heterodimer of GatD and GatE.

It catalyses the reaction L-glutamyl-tRNA(Gln) + L-glutamine + ATP + H2O = L-glutaminyl-tRNA(Gln) + L-glutamate + ADP + phosphate + H(+). Allows the formation of correctly charged Gln-tRNA(Gln) through the transamidation of misacylated Glu-tRNA(Gln) in organisms which lack glutaminyl-tRNA synthetase. The reaction takes place in the presence of glutamine and ATP through an activated gamma-phospho-Glu-tRNA(Gln). The GatDE system is specific for glutamate and does not act on aspartate. The sequence is that of Glutamyl-tRNA(Gln) amidotransferase subunit E from Methanocaldococcus jannaschii (strain ATCC 43067 / DSM 2661 / JAL-1 / JCM 10045 / NBRC 100440) (Methanococcus jannaschii).